The chain runs to 263 residues: Polyglutamine-binding protein 1 (263 aa).

Residues 46–80 enclose the WW domain; the sequence is EGLPPSWYKVFDPSCGLPYYWNVETDLVSWLSPHD. The interval 94–263 is disordered; the sequence is NNNADAEDKS…AEASRTKQQD (170 aa). The span at 99–173 shows a compositional bias: basic and acidic residues; that stretch reads AEDKSDRNLE…DKADREEGKD (75 aa). The 1-1; approximate repeat unit spans residues 104–110; the sequence is DRNLEKV. Positions 104–138 are 5 X 7 AA approximate tandem repeats of D-R-[NS]-H-E-K-S; that stretch reads DRNLEKVDRNHEKSDRSHEKPDRSHEKADRNHEKN. A 1-2 repeat occupies 111–117; it reads DRNHEKS. One copy of the 1-3; approximate repeat lies at 118-124; it reads DRSHEKP. One copy of the 1-4; approximate repeat lies at 125–131; the sequence is DRSHEKA. One copy of the 1-5; approximate repeat lies at 132–138; that stretch reads DRNHEKN. Tandem repeats lie at residues 139–140, 141–142, 143–144, 150–151, 152–153, 154–155, 156–157, 158–159, and 160–161. A 3 X 2 AA tandem repeats of [DE]-R region spans residues 139-144; sequence DRERER. Residues 150–161 are 6 X 2 AA tandem repeats of [DE]-R; the sequence is DRERDRDRERER. Residues 243-253 are important for interaction with TXNL4A; it reads YPSPGAVLRAN. Ser-245 bears the Phosphoserine mark.

In terms of assembly, interacts with POU3F2/Brn-2, ATXN1, TXNL4A, HTT and AR. Interaction with ATXN1 correlates positively with the length of the polyglutamine tract. Interacts with RNA polymerase II large subunit in a phosphorylation-dependent manner. Forms a ternary complex with ATXN1 mutant and phosphorylated RNA polymerase II. Interacts (via C-terminus) with TXNL4A and CD2BP2. Interacts (via WW domain) with ATN1 and SF3B1, and may interact with additional splice factors. Interacts (via WW domain) with WBP11; Leading to reduce interaction between PQBP1 and TXNL4A. Interacts with CAPRIN1. Interacts with DDX1. Interacts with SFPQ. Interacts with KHSRP. As to expression, detected in brain cortex and hippocampus neurons (at protein level). Expressed in brain with high level in cerebellar cortex, hippocampus and olfactory bulb.

It localises to the nucleus. Its subcellular location is the nucleus speckle. It is found in the cytoplasmic granule. Functionally, intrinsically disordered protein that acts as a scaffold, and which is involved in different processes, such as pre-mRNA splicing, transcription regulation, innate immunity and neuron development. Interacts with splicing-related factors via the intrinsically disordered region and regulates alternative splicing of target pre-mRNA species. May suppress the ability of POU3F2 to transactivate the DRD1 gene in a POU3F2 dependent manner. Can activate transcription directly or via association with the transcription machinery. May be involved in ATXN1 mutant-induced cell death. The interaction with ATXN1 mutant reduces levels of phosphorylated RNA polymerase II large subunit. Involved in the assembly of cytoplasmic stress granule, possibly by participating in the transport of neuronal RNA granules. Also acts as an innate immune sensor of infection by retroviruses, by detecting the presence of reverse-transcribed DNA in the cytosol. Directly binds retroviral reverse-transcribed DNA in the cytosol and interacts with CGAS, leading to activate the cGAS-STING signaling pathway, triggering type-I interferon production. The polypeptide is Polyglutamine-binding protein 1 (Pqbp1) (Mus musculus (Mouse)).